The following is a 380-amino-acid chain: NADPH oxidoreductase (380 aa).

Positions 58–164 (ARELRGRILG…AAPQGNFVLP (107 aa)) constitute an FAD-binding FR-type domain. In terms of domain architecture, 2Fe-2S ferredoxin-type spans 299 to 380 (GTVTFARSGK…AASGDCVLDI (82 aa)). The [2Fe-2S] cluster site is built by cysteine 333, cysteine 338, cysteine 341, and cysteine 368.

In terms of assembly, interacts with DesA3 to form a functional acyl-CoA desaturase complex. It depends on [2Fe-2S] cluster as a cofactor. The cofactor is FAD.

It is found in the cell membrane. Its pathway is lipid metabolism; fatty acid metabolism. In terms of biological role, is likely involved in the aerobic desaturation system responsible for the synthesis of oleic acid from stearoyl-CoA; oleic acid is a precursor of mycobacterial membrane phospholipids and triglycerides. Is the electron transfer partner for the stearoyl-CoA 9-desaturase DesA3. Catalyzes electron transfer reaction between NADPH and the diiron center of DesA3. Cannot use NADH. The chain is NADPH oxidoreductase from Mycobacterium tuberculosis (strain ATCC 25618 / H37Rv).